We begin with the raw amino-acid sequence, 57 residues long: GRSHMVLNSALEGARGGPGGEEIPERFSIPELQWMLSNAELAPVQADEPPQSRMDLV.

The tract at residues 1–26 is disordered; sequence GRSHMVLNSALEGARGGPGGEEIPER.

It belongs to the somatostatin family.

The protein localises to the secreted. Functionally, somatostatin inhibits the release of somatotropin. The chain is Somatostatin-2 (sst2) from Piaractus mesopotamicus (Small-scaled pacu).